The sequence spans 75 residues: ATP synthase subunit c (75 aa).

Helical transmembrane passes span 12–32 and 49–69; these read LASI…GIVV and LTVL…IGIG.

Belongs to the ATPase C chain family. F-type ATPases have 2 components, F(1) - the catalytic core - and F(0) - the membrane proton channel. F(1) has five subunits: alpha(3), beta(3), gamma(1), delta(1), epsilon(1). F(0) has three main subunits: a(1), b(2) and c(10-14). The alpha and beta chains form an alternating ring which encloses part of the gamma chain. F(1) is attached to F(0) by a central stalk formed by the gamma and epsilon chains, while a peripheral stalk is formed by the delta and b chains.

It localises to the cell membrane. Functionally, f(1)F(0) ATP synthase produces ATP from ADP in the presence of a proton or sodium gradient. F-type ATPases consist of two structural domains, F(1) containing the extramembraneous catalytic core and F(0) containing the membrane proton channel, linked together by a central stalk and a peripheral stalk. During catalysis, ATP synthesis in the catalytic domain of F(1) is coupled via a rotary mechanism of the central stalk subunits to proton translocation. Key component of the F(0) channel; it plays a direct role in translocation across the membrane. A homomeric c-ring of between 10-14 subunits forms the central stalk rotor element with the F(1) delta and epsilon subunits. In Tropheryma whipplei (strain TW08/27) (Whipple's bacillus), this protein is ATP synthase subunit c.